We begin with the raw amino-acid sequence, 143 residues long: Glutamate-rich protein 4 (143 aa).

Positions 90 to 106 (LEEEEEDDDEEEQEEEG) are enriched in acidic residues. The tract at residues 90–143 (LEEEEEDDDEEEQEEEGEGKNCVEENKGLQGKQGEKCSGNPYPAQRLPDFEMTI) is disordered. The segment covering 107–116 (EGKNCVEENK) has biased composition (basic and acidic residues).

The polypeptide is Glutamate-rich protein 4 (Erich4) (Rattus norvegicus (Rat)).